A 77-amino-acid polypeptide reads, in one-letter code: MAVKYKIKKGDEVKVIAGDDKGKVAKVIAVLPKKGQVIVEGVKVAKKAVKPTEKNPNGGFISKEMPIDISNVAKVEG.

Belongs to the universal ribosomal protein uL24 family. In terms of assembly, part of the 50S ribosomal subunit.

One of two assembly initiator proteins, it binds directly to the 5'-end of the 23S rRNA, where it nucleates assembly of the 50S subunit. In terms of biological role, one of the proteins that surrounds the polypeptide exit tunnel on the outside of the subunit. The sequence is that of Large ribosomal subunit protein uL24 from Campylobacter fetus subsp. fetus (strain 82-40).